We begin with the raw amino-acid sequence, 296 residues long: Nitrogenase iron protein (296 aa).

ATP is bound at residue G10–S17. C98 serves as a coordination point for [4Fe-4S] cluster. The residue at position 101 (R101) is an ADP-ribosylarginine; by dinitrogenase reductase ADP-ribosyltransferase. Position 133 (C133) interacts with [4Fe-4S] cluster.

This sequence belongs to the NifH/BchL/ChlL family. In terms of assembly, homodimer. [4Fe-4S] cluster serves as cofactor. In terms of processing, the reversible ADP-ribosylation of Arg-101 inactivates the nitrogenase reductase and regulates nitrogenase activity.

The enzyme catalyses N2 + 8 reduced [2Fe-2S]-[ferredoxin] + 16 ATP + 16 H2O = H2 + 8 oxidized [2Fe-2S]-[ferredoxin] + 2 NH4(+) + 16 ADP + 16 phosphate + 6 H(+). Functionally, the key enzymatic reactions in nitrogen fixation are catalyzed by the nitrogenase complex, which has 2 components: the iron protein and the molybdenum-iron protein. In Magnetococcus marinus (strain ATCC BAA-1437 / JCM 17883 / MC-1), this protein is Nitrogenase iron protein.